The sequence spans 74 residues: Translation initiation factor IF-1 (74 aa).

One can recognise an S1-like domain in the interval 1–72 (MADTEKLKML…TRGRITYRHR (72 aa)).

The protein belongs to the IF-1 family. In terms of assembly, component of the 30S ribosomal translation pre-initiation complex which assembles on the 30S ribosome in the order IF-2 and IF-3, IF-1 and N-formylmethionyl-tRNA(fMet); mRNA recruitment can occur at any time during PIC assembly.

It is found in the cytoplasm. In terms of biological role, one of the essential components for the initiation of protein synthesis. Stabilizes the binding of IF-2 and IF-3 on the 30S subunit to which N-formylmethionyl-tRNA(fMet) subsequently binds. Helps modulate mRNA selection, yielding the 30S pre-initiation complex (PIC). Upon addition of the 50S ribosomal subunit IF-1, IF-2 and IF-3 are released leaving the mature 70S translation initiation complex. The protein is Translation initiation factor IF-1 of Ureaplasma parvum serovar 3 (strain ATCC 700970).